Reading from the N-terminus, the 479-residue chain is Glutamate--tRNA ligase 2 (479 aa).

The 'HIGH' region motif lies at 10–20 (PSPTGSLHIGG). A 'KMSKS' region motif is present at residues 243-247 (KLSKR). Position 246 (lysine 246) interacts with ATP.

Belongs to the class-I aminoacyl-tRNA synthetase family. Glutamate--tRNA ligase type 1 subfamily. Monomer.

The protein localises to the cytoplasm. The catalysed reaction is tRNA(Glu) + L-glutamate + ATP = L-glutamyl-tRNA(Glu) + AMP + diphosphate. Catalyzes the attachment of glutamate to tRNA(Glu) in a two-step reaction: glutamate is first activated by ATP to form Glu-AMP and then transferred to the acceptor end of tRNA(Glu). In Thermoanaerobacter pseudethanolicus (strain ATCC 33223 / 39E) (Clostridium thermohydrosulfuricum), this protein is Glutamate--tRNA ligase 2.